The sequence spans 253 residues: Aminoglycoside nucleotidyltransferase (4') (253 aa).

As to quaternary structure, homodimer.

It catalyses the reaction kanamycin A + ATP = 4'-adenylylkanamycin A + diphosphate. The catalysed reaction is amikacin + ATP = 4'-adenylylamikacin + diphosphate. The enzyme catalyses neomycin B + ATP = 4'-adenylylneomycin B + diphosphate. It carries out the reaction paromomycin + ATP = 4'-adenylylparomomycin + diphosphate. It catalyses the reaction ribostamycin + ATP = 4'-adenylylribostamycin + diphosphate. The catalysed reaction is tobramycin + ATP = 4'-adenylyltobramycin + diphosphate. The enzyme catalyses kanamycin A + CTP = 4'-cytidylylkanamycin A + diphosphate. It carries out the reaction kanamycin A + GTP = 4'-guanylylkanamycin A + diphosphate. It catalyses the reaction kanamycin A + ITP = 4'-inosinylylkanamycin A + diphosphate. The catalysed reaction is dTTP + kanamycin A = 4'-thymidylylkanamycin A + diphosphate. The enzyme catalyses kanamycin A + UTP = 4'-uridylylkanamycin A + diphosphate. It carries out the reaction kanamycin A + dATP = 4'-(2'-deoxyadenylyl)kanamycin A + diphosphate. It catalyses the reaction kanamycin A + dCTP = 4'-(2'-deoxycytidylyl)kanamycin A + diphosphate. The catalysed reaction is kanamycin A + dGTP = 4'-(2'-deoxyguanylyl)kanamycin A + diphosphate. The enzyme catalyses dUTP + kanamycin A = 4'-(2'-deoxyuridylyl)kanamycin A + diphosphate. It carries out the reaction amikacin + GTP = 4'-guanylylamikacin + diphosphate. It catalyses the reaction amikacin + ITP = 4'-inosinylylamikacin + diphosphate. The catalysed reaction is amikacin + CTP = 4'-cytidylylamikacin + diphosphate. The enzyme catalyses amikacin + UTP = 4'-uridylylamikacin + diphosphate. It carries out the reaction amikacin + dTTP = 4'-thymidylylamikacin + diphosphate. Functionally, inactivates aminoglycoside antibiotics such as kanamycin by catalyzing the transfer of a nucleotidyl group from nucleoside triphosphates such as (d)ATP to the 4'-hydroxyl group of the aminoglycoside. The chain is Aminoglycoside nucleotidyltransferase (4') from Bacillus sp.